Reading from the N-terminus, the 1025-residue chain is Retrovirus-related Pol polyprotein from type-1 retrotransposable element R2 (1025 aa).

Residues 1-11 are compositionally biased toward polar residues; sequence NQIKKSNTSTG. Positions 1 to 38 are disordered; the sequence is NQIKKSNTSTGARIPKAMTNPADNFAGGQWKPPGRRSA. The C2H2-type zinc-finger motif lies at 46-69; it reads FVCEHCLRAFTTNTGRGLHIKRAH. Residues 146 to 158 show a composition bias toward basic and acidic residues; that stretch reads NRARETELTRLET. The tract at residues 146–172 is disordered; it reads NRARETELTRLETADEDPASQEQDNPN. A Reverse transcriptase domain is found at 358 to 635; the sequence is MIMYHGQCPR…DQWKYLGVVY (278 aa). The nucleic acid-binding endonuclease stretch occupies residues 755 to 1025; the sequence is SLLGGDWVAE…YRTERRRTAN (271 aa).

It carries out the reaction DNA(n) + a 2'-deoxyribonucleoside 5'-triphosphate = DNA(n+1) + diphosphate. This is Retrovirus-related Pol polyprotein from type-1 retrotransposable element R2 from Nasonia vitripennis (Parasitic wasp).